Reading from the N-terminus, the 56-residue chain is Small ribosomal subunit protein uS14 (56 aa).

At Ser9 the chain carries Phosphoserine. Arg12 bears the Omega-N-methylarginine mark. Zn(2+) contacts are provided by Cys21, Cys24, Cys39, and Cys42. Lys48 carries the post-translational modification N6-acetyllysine.

This sequence belongs to the universal ribosomal protein uS14 family. Component of the 40S small ribosomal subunit. It depends on Zn(2+) as a cofactor.

The protein resides in the cytoplasm. It localises to the cytosol. The protein localises to the rough endoplasmic reticulum. Its function is as follows. Component of the small ribosomal subunit. The ribosome is a large ribonucleoprotein complex responsible for the synthesis of proteins in the cell. This chain is Small ribosomal subunit protein uS14 (RPS29), found in Sus scrofa (Pig).